The sequence spans 597 residues: Phosphoinositide phospholipase C 4 (597 aa).

The region spanning 26-60 is the EF-hand domain; sequence GPVEDVRDLFEKYTEGDAHMSPEQLQKLMTEEGGE. The 144-residue stretch at 114 to 257 folds into the PI-PLC X-box domain; sequence QNMDAPLSHY…LKEKILISTK (144 aa). Catalysis depends on residues His129 and His174. Over residues 259–290 the composition is skewed to basic and acidic residues; that stretch reads PKEYLEANDTKEKDNGEKGKDSDEDVWGKEPE. Positions 259-324 are disordered; sequence PKEYLEANDT…ERGSCESDTS (66 aa). Residues 293–309 are compositionally biased toward polar residues; that stretch reads ISTQSDLDKVTSSVNDL. The PI-PLC Y-box domain maps to 333–449; it reads KRLIAIHAGK…GYVKKPDFLM (117 aa). The 131-residue stretch at 449-579 folds into the C2 domain; sequence MDASPNGQDF…QGIRAVPLFN (131 aa).

It depends on Ca(2+) as a cofactor. As to expression, low expression in leaves, roots, flowers and siliques. Expressed in pollen and in cells of the stigma surface.

It is found in the cytoplasm. The protein localises to the cytosol. The protein resides in the cell membrane. It carries out the reaction a 1,2-diacyl-sn-glycero-3-phospho-(1D-myo-inositol-4,5-bisphosphate) + H2O = 1D-myo-inositol 1,4,5-trisphosphate + a 1,2-diacyl-sn-glycerol + H(+). The production of the second messenger molecules diacylglycerol (DAG) and inositol 1,4,5-trisphosphate (IP3) is mediated by activated phosphatidylinositol-specific phospholipase C enzymes. The protein is Phosphoinositide phospholipase C 4 (PLC4) of Arabidopsis thaliana (Mouse-ear cress).